The following is a 388-amino-acid chain: Alpha-2A adrenergic receptor (388 aa).

Residues 1–22 (MICGANATNGTNATKEYTLLVA) are Extracellular-facing. 3 N-linked (GlcNAc...) asparagine glycosylation sites follow: N6, N9, and N12. The chain crosses the membrane as a helical span at residues 23–48 (LPLSIAVGLLILLIIFGNVLVIIAVF). The Cytoplasmic segment spans residues 49 to 59 (TSRALRAPQNL). A helical membrane pass occupies residues 60–85 (FLVSLASADILVATLVMPFSLANELM). Topologically, residues 86–95 (GMWTFGGVWC) are extracellular. Cysteines 95 and 169 form a disulfide. A helical transmembrane segment spans residues 96–118 (EIYLALDVLFCTASITHLCAISL). Topologically, residues 119 to 138 (DRYWSITQAIEYNLKRTPQR) are cytoplasmic. A helical transmembrane segment spans residues 139 to 162 (IKRIIFIVWIIAAVISCPPLITMK). Residues 163-173 (KSEGDICDINK) are Extracellular-facing. The chain crosses the membrane as a helical span at residues 174-198 (EKWYIVSSCIGSFFLPCIIMVLVYI). Over 199 to 311 (RIYQIAKKRT…RQNREKRFTF (113 aa)) the chain is Cytoplasmic. The tract at residues 208–291 (TRAPPGDHRK…PGDGDKTEAC (84 aa)) is disordered. Over residues 212–231 (PGDHRKNEVGKKENDPHEKL) the composition is skewed to basic and acidic residues. Over residues 266–275 (LKKKSSKGKT) the composition is skewed to basic residues. The chain crosses the membrane as a helical span at residues 312–337 (VLAVVIGVFVICWFPFFFTYTFTAFC). Residues 338–344 (DCCVPET) are Extracellular-facing. Residues 345 to 368 (LFKFFFWFGYCNSSLNPIIYTIFN) form a helical membrane-spanning segment. Over 369 to 388 (NDFRRSFKKILCRRDKRRVV) the chain is Cytoplasmic. The S-palmitoyl cysteine moiety is linked to residue C380.

This sequence belongs to the G-protein coupled receptor 1 family. Adrenergic receptor subfamily. ADRA2A sub-subfamily.

The protein localises to the cell membrane. Its function is as follows. Alpha-2 adrenergic receptors mediate the catecholamine-induced inhibition of adenylate cyclase through the action of G proteins. The order of potency for this receptor is dexmedetomidine &gt; oxymetazoline = epinephrine &gt; norepinephrine. This chain is Alpha-2A adrenergic receptor, found in Danio rerio (Zebrafish).